Consider the following 197-residue polypeptide: ATP-dependent Clp protease proteolytic subunit (197 aa).

The active-site Nucleophile is the Ser-97. The active site involves His-122.

It belongs to the peptidase S14 family. As to quaternary structure, fourteen ClpP subunits assemble into 2 heptameric rings which stack back to back to give a disk-like structure with a central cavity, resembling the structure of eukaryotic proteasomes.

Its subcellular location is the cytoplasm. The catalysed reaction is Hydrolysis of proteins to small peptides in the presence of ATP and magnesium. alpha-casein is the usual test substrate. In the absence of ATP, only oligopeptides shorter than five residues are hydrolyzed (such as succinyl-Leu-Tyr-|-NHMec, and Leu-Tyr-Leu-|-Tyr-Trp, in which cleavage of the -Tyr-|-Leu- and -Tyr-|-Trp bonds also occurs).. Cleaves peptides in various proteins in a process that requires ATP hydrolysis. Has a chymotrypsin-like activity. Plays a major role in the degradation of misfolded proteins. This Trichlorobacter lovleyi (strain ATCC BAA-1151 / DSM 17278 / SZ) (Geobacter lovleyi) protein is ATP-dependent Clp protease proteolytic subunit.